Here is a 166-residue protein sequence, read N- to C-terminus: EEF1A lysine methyltransferase 1 (166 aa).

Belongs to the class I-like SAM-binding methyltransferase superfamily. EFM5 family.

The protein resides in the cytoplasm. It carries out the reaction L-lysyl-[protein] + 3 S-adenosyl-L-methionine = N(6),N(6),N(6)-trimethyl-L-lysyl-[protein] + 3 S-adenosyl-L-homocysteine + 3 H(+). Protein-lysine methyltransferase that selectively catalyzes the trimethylation of EEF1A at 'Lys-79'. In Danio rerio (Zebrafish), this protein is EEF1A lysine methyltransferase 1.